The following is a 98-amino-acid chain: Beta-elicitin DRE-beta (98 aa).

Intrachain disulfides connect C3–C71, C27–C56, and C51–C95.

This sequence belongs to the elicitin family.

Its subcellular location is the secreted. In terms of biological role, induces local and distal defense responses (incompatible hypersensitive reaction) in plants from the solanaceae and cruciferae families. Elicits leaf necrosis and causes the accumulation of pathogenesis-related proteins. Might interact with the lipidic molecules of the plasma membrane. The chain is Beta-elicitin DRE-beta from Phytophthora drechsleri.